Reading from the N-terminus, the 104-residue chain is N(4)-acetylcytidine amidohydrolase (104 aa).

Residues 7–95 form the ASCH domain; it reads MTFFERFETD…IQDIYPGISQ (89 aa). Lys-22 (proton acceptor) is an active-site residue. Residue Thr-25 is the Nucleophile of the active site. Catalysis depends on Glu-75, which acts as the Proton donor.

It belongs to the N(4)-acetylcytidine amidohydrolase family.

The enzyme catalyses N(4)-acetylcytidine + H2O = cytidine + acetate + H(+). It catalyses the reaction N(4)-acetyl-2'-deoxycytidine + H2O = 2'-deoxycytidine + acetate + H(+). The catalysed reaction is N(4)-acetylcytosine + H2O = cytosine + acetate + H(+). Functionally, catalyzes the hydrolysis of N(4)-acetylcytidine (ac4C). The sequence is that of N(4)-acetylcytidine amidohydrolase from Vibrio atlanticus (strain LGP32) (Vibrio splendidus (strain Mel32)).